We begin with the raw amino-acid sequence, 206 residues long: MAKYLGPKLKLSRREGTDLFLKSGLRSIESKCKLEQPPGQHGIRKPRLSDYAIQLREKQKVRRLYGVLERQFKIYYKLAASLKGNTGANLLQLLESRLDNVVYRMGFGCTRSESRQLINHKSIMVNNKVVNIASYQVSPNDQISIRNKSKNQSRIKAALELVEQREKPIWLEVNSTKMEGIFKRFPERSDLSAEINEYLIVELYSK.

An S4 RNA-binding domain is found at Ser-96–Lys-156.

Belongs to the universal ribosomal protein uS4 family. In terms of assembly, part of the 30S ribosomal subunit. Contacts protein S5. The interaction surface between S4 and S5 is involved in control of translational fidelity.

Its function is as follows. One of the primary rRNA binding proteins, it binds directly to 16S rRNA where it nucleates assembly of the body of the 30S subunit. In terms of biological role, with S5 and S12 plays an important role in translational accuracy. The protein is Small ribosomal subunit protein uS4 of Buchnera aphidicola subsp. Acyrthosiphon pisum (strain 5A).